Here is a 541-residue protein sequence, read N- to C-terminus: Transcription termination factor MTERF4, chloroplastic (541 aa).

Residues 1–45 constitute a chloroplast transit peptide; that stretch reads MKIRFCNGFTKPGFLLVHFEPPSFFAVRSRSLSDSTYGNLCNHKK. Disordered regions lie at residues 66–103 and 503–541; these read SRSL…SLYS and EVET…EEFA. Positions 85–99 are enriched in basic and acidic residues; the sequence is GRDRDRDKDKGRDSK. Polar residues predominate over residues 507-517; the sequence is DPSSFDMNTLM. Acidic residues predominate over residues 521–541; that stretch reads REEESDSEYEEEEDDDDEEFA.

Belongs to the mTERF family.

It localises to the plastid. It is found in the chloroplast. The protein localises to the mitochondrion. Its function is as follows. Transcription termination factor required for processing and steady-state levels of plastid transcripts. Required for splicing of the chloroplastic Clp protease (ClpP) group IIa intron. Required for maturation of 16S rRNA and 23S rRNA in the chloroplast. Essential for embryogenesis. Required for the maintenance of the correct levels of transcripts in the mitochondria and chloroplasts. This Arabidopsis thaliana (Mouse-ear cress) protein is Transcription termination factor MTERF4, chloroplastic.